Reading from the N-terminus, the 595-residue chain is Epsin-2 (595 aa).

6 residues coordinate a 1,2-diacyl-sn-glycero-3-phospho-(1D-myo-inositol-4,5-bisphosphate): R8, K11, R25, N30, R63, and H73. The ENTH domain maps to 12-144 (NIVNNYSEAE…KDEERLKVER (133 aa)). Polar residues predominate over residues 164–183 (NQITFGRGSSQPNLSTSYSE). Disordered regions lie at residues 164–254 (NQIT…RLRR), 267–289 (SRRD…PGSH), 305–396 (SGPV…KPSS), and 423–469 (TSKK…PESF). R170 carries the omega-N-methylarginine modification. Phosphoserine is present on residues S173, S192, and S195. Composition is skewed to polar residues over residues 197–216 (HGST…PQTS) and 235–245 (EQSSESVQTAR). UIM domains are found at residues 218–237 (EEEL…AEQS) and 255–274 (GDDL…TVKV). Residues 306–337 (GPVTQKTEPWSAGASANQTNPWGGTVAPSNIT) are compositionally biased toward polar residues. Tandem repeats lie at residues 313–315 (EPW), 325–327 (NPW), 338–340 (DPW), and 352–354 (DPW). Positions 313–389 (EPWSAGASAN…SNAGKTTDAW (77 aa)) are 6 X 3 AA repeats of [DE]-P-W. Over residues 358–367 (TTASTQSVPK) the composition is skewed to polar residues. The stretch at 370 to 372 (DPW) is repeat 5. The segment covering 374–384 (ASQQPASNAGK) has biased composition (polar residues). The stretch at 387–389 (DAW) is repeat 6. The residue at position 443 (S443) is a Phosphoserine. Over residues 449–460 (SQSLTSASSKPS) the composition is skewed to low complexity. A Phosphothreonine modification is found at T465. Tandem repeats lie at residues 494 to 496 (NPF) and 508 to 510 (NPF). A 3 X 3 AA repeats of N-P-F region spans residues 494–593 (NPFLAPGAAA…AQSTGTTNPF (100 aa)). S526 is modified (phosphoserine). Repeat unit 3 spans residues 591–593 (NPF).

This sequence belongs to the epsin family. As to quaternary structure, binds EPS15, AP-2 and clathrin. Interacts with UBQLN2. Interacts with ITSN1. Ubiquitinated.

Its subcellular location is the cytoplasm. Its function is as follows. Plays a role in the formation of clathrin-coated invaginations and endocytosis. This chain is Epsin-2 (Epn2), found in Mus musculus (Mouse).